A 58-amino-acid chain; its full sequence is Large ribosomal subunit protein bL32c (58 aa).

This sequence belongs to the bacterial ribosomal protein bL32 family.

It is found in the plastid. The protein resides in the chloroplast. The sequence is that of Large ribosomal subunit protein bL32c (rpl32) from Adiantum capillus-veneris (Maidenhair fern).